The primary structure comprises 185 residues: Peptidyl-tRNA hydrolase (185 aa).

Residue Tyr14 participates in tRNA binding. His19 acts as the Proton acceptor in catalysis. 3 residues coordinate tRNA: Tyr65, Asn67, and Asn113.

This sequence belongs to the PTH family. In terms of assembly, monomer.

The protein localises to the cytoplasm. The enzyme catalyses an N-acyl-L-alpha-aminoacyl-tRNA + H2O = an N-acyl-L-amino acid + a tRNA + H(+). In terms of biological role, hydrolyzes ribosome-free peptidyl-tRNAs (with 1 or more amino acids incorporated), which drop off the ribosome during protein synthesis, or as a result of ribosome stalling. Catalyzes the release of premature peptidyl moieties from peptidyl-tRNA molecules trapped in stalled 50S ribosomal subunits, and thus maintains levels of free tRNAs and 50S ribosomes. This Rickettsia canadensis (strain McKiel) protein is Peptidyl-tRNA hydrolase.